A 777-amino-acid chain; its full sequence is Protein translocase subunit SecA (777 aa).

ATP is bound by residues Gln-94, 112-116 (GEGKT), and Asp-501.

This sequence belongs to the SecA family. In terms of assembly, monomer and homodimer. Part of the essential Sec protein translocation apparatus which comprises SecA, SecYEG and auxiliary proteins SecDF. Other proteins may also be involved.

It localises to the cell membrane. The protein localises to the cytoplasm. The catalysed reaction is ATP + H2O + cellular proteinSide 1 = ADP + phosphate + cellular proteinSide 2.. Its function is as follows. Part of the Sec protein translocase complex. Interacts with the SecYEG preprotein conducting channel. Has a central role in coupling the hydrolysis of ATP to the transfer of proteins into and across the cell membrane, serving as an ATP-driven molecular motor driving the stepwise translocation of polypeptide chains across the membrane. The polypeptide is Protein translocase subunit SecA (Mycobacterium avium (strain 104)).